The following is a 330-amino-acid chain: D-alanine--D-alanine ligase (330 aa).

Residues 120–326 (KLWYDALGIP…FKTFLQKAVL (207 aa)) enclose the ATP-grasp domain. 150 to 205 (AFKQWGGLFVKAACQGSSVGCYKVTSEEELAQAINGAFGYSQQVLVEKAVKPRELE) serves as a coordination point for ATP. The Mg(2+) site is built by D280, E293, and N295.

It belongs to the D-alanine--D-alanine ligase family. It depends on Mg(2+) as a cofactor. The cofactor is Mn(2+).

Its subcellular location is the cytoplasm. The enzyme catalyses 2 D-alanine + ATP = D-alanyl-D-alanine + ADP + phosphate + H(+). It participates in cell wall biogenesis; peptidoglycan biosynthesis. Cell wall formation. In Aliivibrio fischeri (strain MJ11) (Vibrio fischeri), this protein is D-alanine--D-alanine ligase.